Here is a 138-residue protein sequence, read N- to C-terminus: MERLVLTLCTLPLAVASAGCATTPARNLSCYQCFKVSSWTECPPTWCSPLDQVCISNEVVVSFKWSVRVLLSKRCAPRCPNDNMKFEWSPAPMVQGVITRRCCSWALCNRALTPQEGRWALRGGLLLQVGLSLLRALL.

The N-terminal stretch at 1–16 is a signal peptide; it reads MERLVLTLCTLPLAVA. A glycan (N-linked (GlcNAc...) asparagine) is linked at Asn-27. The UPAR/Ly6 domain maps to 28 to 122; it reads LSCYQCFKVS…TPQEGRWALR (95 aa). Cystine bridges form between Cys-30–Cys-47 and Cys-103–Cys-108. Residue Gly-117 is the site of GPI-anchor amidated glycine attachment. Positions 118–138 are cleaved as a propeptide — removed in mature form; sequence RWALRGGLLLQVGLSLLRALL.

The protein resides in the cell membrane. In Homo sapiens (Human), this protein is Lymphocyte antigen 6L.